A 448-amino-acid chain; its full sequence is Phosphohexose mutases (448 aa).

S97 serves as the catalytic Phosphoserine intermediate. Residues S97, D237, D239, and D241 each contribute to the Mg(2+) site.

Belongs to the phosphohexose mutase family. Requires Mg(2+) as cofactor.

It catalyses the reaction alpha-D-glucose 1-phosphate = alpha-D-glucose 6-phosphate. It carries out the reaction alpha-D-mannose 1-phosphate = D-mannose 6-phosphate. It participates in nucleotide-sugar biosynthesis; GDP-alpha-D-mannose biosynthesis; alpha-D-mannose 1-phosphate from D-fructose 6-phosphate: step 2/2. In terms of biological role, involved in xanthan production. The protein is Phosphohexose mutases (xanA) of Xanthomonas campestris pv. campestris (strain B100).